A 235-amino-acid chain; its full sequence is Carboxy-S-adenosyl-L-methionine synthase (235 aa).

S-adenosyl-L-methionine contacts are provided by residues Tyr-35, 60–62 (GCS), 83–84 (DN), Asn-124, and Arg-191.

Belongs to the class I-like SAM-binding methyltransferase superfamily. Cx-SAM synthase family. In terms of assembly, homodimer.

The catalysed reaction is prephenate + S-adenosyl-L-methionine = carboxy-S-adenosyl-L-methionine + 3-phenylpyruvate + H2O. Catalyzes the conversion of S-adenosyl-L-methionine (SAM) to carboxy-S-adenosyl-L-methionine (Cx-SAM). This is Carboxy-S-adenosyl-L-methionine synthase from Campylobacter jejuni subsp. jejuni serotype O:6 (strain 81116 / NCTC 11828).